The following is a 379-amino-acid chain: Putative 2-hydroxyacid dehydrogenase YGL185C (379 aa).

Residues 207 to 208 (SI), 291 to 293 (LGR), and Asp317 contribute to the NAD(+) site. Arg293 is a catalytic residue. The active site involves Glu322. Residue His341 is the Proton donor of the active site. 341–344 (HLGS) provides a ligand contact to NAD(+).

The protein belongs to the D-isomer specific 2-hydroxyacid dehydrogenase family.

The protein is Putative 2-hydroxyacid dehydrogenase YGL185C of Saccharomyces cerevisiae (strain ATCC 204508 / S288c) (Baker's yeast).